A 410-amino-acid polypeptide reads, in one-letter code: MIRSLLRSFETALKLHAGLNMHPMHCSRRLLFSQYENRASPSRLTSSGTLGSNEAENDYVPYRQDRETGTKTRVLLEALRERFRFTDAELQKIISDELVHRCYRGRSLTLVMDTLQLEGVSRRSFVEYPWLLSLDNKRLELKMQLLKSMDFKDINHFVPFLRLTVPRLRKLVGALNSERDAMPQRNRVYYISEKLDVSPDIVSKYLSKRLFILEMPFEMFEKNLQHMIDYNVSPINVLKDLWAFRYTPKSVQLRLERAKRAKKDKIMPWMVRCPEPILQRSLKLSLDELKVLGEFSSVVEYLAHRLGFSTSEAKAIMDKHPQVHTVRVTKIKEVLDYLLDEAQFTRFEVAQNPRILCHSLKTTKERMEELKSHGCRPSSLVILCRSRREYDKFLQNWISHERNPQSVSEG.

Residues Met-1 to Leu-44 constitute a mitochondrion transit peptide.

Belongs to the mTERF family.

The protein resides in the mitochondrion. Its function is as follows. Transcription termination factor. Binds promoter DNA and regulates mitochondrial replication and transcription. Transcription termination activity may be polarized with highest termination activity occurring when its DNA-binding site is positioned in the reverse orientation with respect to the incoming RNA polymerase. Required for normal topology and maintenance of mitochondrial DNA (mtDNA) levels. Regulates mtDNA replication by promoting replication pausing, possibly by acting as a natural barrier to replication fork progression. Its function in replication pausing prevents unregulated replication that may occur for example by collisions between the machineries of DNA replication and transcription during mtDNA synthesis. This ensures the incorporation of RNA transcripts into replication intermediates at the replication fork and allow for proper fork progression. Shares mtDNA binding sites with the mitochondrial termination factor mTerf5 and thereby may antagonize mTerf5 function during replication to regulate pausing. Likely to function downstream of Dref which activates genes involved in mtDNA replication and maintenance. The protein is Transcription termination factor, mitochondrial of Drosophila melanogaster (Fruit fly).